The following is a 273-amino-acid chain: MLTAHHLDVARRHHAILRNLSLSIEPGRVTALLGRNGAGKSTLLKTFAGELTGGVAPNGVRVTGDITLNGEPLARIDAPRLACLRAVLPQAAQPAFPFSVDEIVLLGRYPHARRSGATSHRDRDIAWCALERAGADALVGRDVTTLSGGELARVQFARVLAQLWPDDEAIESGPRYLLLDEPTAALDLSHQHRLLETVRAVAREWQLGVLAIVHDPNLAARHADTIAMLADGTIVAHGSPRDVMTPAHIAQCYGFAVKMVETGDGAPPVMVPA.

The ABC transporter domain occupies 2-256 (LTAHHLDVAR…AHIAQCYGFA (255 aa)). Residue 34–41 (GRNGAGKS) participates in ATP binding.

It belongs to the ABC transporter superfamily. Heme (hemin) importer (TC 3.A.1.14.5) family. The complex is composed of two ATP-binding proteins (HmuV), two transmembrane proteins (HmuU) and a solute-binding protein (HmuT).

The protein resides in the cell inner membrane. Part of the ABC transporter complex HmuTUV involved in hemin import. Responsible for energy coupling to the transport system. The sequence is that of Hemin import ATP-binding protein HmuV from Burkholderia lata (strain ATCC 17760 / DSM 23089 / LMG 22485 / NCIMB 9086 / R18194 / 383).